Reading from the N-terminus, the 122-residue chain is Large ribosomal subunit protein uL14 (122 aa).

Belongs to the universal ribosomal protein uL14 family. Part of the 50S ribosomal subunit. Forms a cluster with proteins L3 and L19. In the 70S ribosome, L14 and L19 interact and together make contacts with the 16S rRNA in bridges B5 and B8.

Its function is as follows. Binds to 23S rRNA. Forms part of two intersubunit bridges in the 70S ribosome. This Bordetella parapertussis (strain 12822 / ATCC BAA-587 / NCTC 13253) protein is Large ribosomal subunit protein uL14.